The sequence spans 453 residues: MNKDIFLTNNLNNKKEKFVPINKENIGMYVCGPTVYDNPHIGNARPLVIFDILFKVLKSKYGHDKINYIRNITDVDDKIIKSAKEKNLSISELTNNVIKDFNDDCNYLNLDNPSQQPKATDHIDLMIKMISTLIEKDFAYVVNDHVYFEVSKFDDYGKLSNKKLEDLIAGSRVEVSDNKKKSEDFVLWKPSKDDEPSWDSPWGKGRPGWHLECSAMSKKYLGNVFDIHGGGIDLIFPHHENEIAQSRCANDSKVFANYWIHNAFITMSNEKMAKSTGNILKIKDFKDNVDGQVLKLALMSAHYKQPLDWNEKLLEDCKNTIDKWYEVYLPPKDKIVLDEDILSPLYDDLNTPGYIAKLHQLYDKALKGGNEEKSLFVLACNFIGILNKTKEEWIEFKKKKSSINEDDILEMISLRNKAREDKNYKEADIIRNKLLDKGVLIEDKDGKTIWKLK.

Cys-31 is a Zn(2+) binding site. Positions 33–43 (PTVYDNPHIGN) match the 'HIGH' region motif. Residues Cys-213, His-238, and Glu-242 each coordinate Zn(2+). The short motif at 271–275 (KMAKS) is the 'KMSKS' region element. Lys-274 is a binding site for ATP.

It belongs to the class-I aminoacyl-tRNA synthetase family. In terms of assembly, monomer. Zn(2+) serves as cofactor.

It is found in the cytoplasm. The enzyme catalyses tRNA(Cys) + L-cysteine + ATP = L-cysteinyl-tRNA(Cys) + AMP + diphosphate. This chain is Cysteine--tRNA ligase, found in Pelagibacter ubique (strain HTCC1062).